Consider the following 173-residue polypeptide: Crossover junction endodeoxyribonuclease RuvC (173 aa).

Active-site residues include D8, E67, and D139. Mg(2+) contacts are provided by D8, E67, and D139.

The protein belongs to the RuvC family. In terms of assembly, homodimer which binds Holliday junction (HJ) DNA. The HJ becomes 2-fold symmetrical on binding to RuvC with unstacked arms; it has a different conformation from HJ DNA in complex with RuvA. In the full resolvosome a probable DNA-RuvA(4)-RuvB(12)-RuvC(2) complex forms which resolves the HJ. Mg(2+) serves as cofactor.

The protein localises to the cytoplasm. It carries out the reaction Endonucleolytic cleavage at a junction such as a reciprocal single-stranded crossover between two homologous DNA duplexes (Holliday junction).. In terms of biological role, the RuvA-RuvB-RuvC complex processes Holliday junction (HJ) DNA during genetic recombination and DNA repair. Endonuclease that resolves HJ intermediates. Cleaves cruciform DNA by making single-stranded nicks across the HJ at symmetrical positions within the homologous arms, yielding a 5'-phosphate and a 3'-hydroxyl group; requires a central core of homology in the junction. The consensus cleavage sequence is 5'-(A/T)TT(C/G)-3'. Cleavage occurs on the 3'-side of the TT dinucleotide at the point of strand exchange. HJ branch migration catalyzed by RuvA-RuvB allows RuvC to scan DNA until it finds its consensus sequence, where it cleaves and resolves the cruciform DNA. The polypeptide is Crossover junction endodeoxyribonuclease RuvC (Shewanella sp. (strain MR-4)).